An 89-amino-acid polypeptide reads, in one-letter code: Small ribosomal subunit protein uS15c (89 aa).

The protein belongs to the universal ribosomal protein uS15 family. Part of the 30S ribosomal subunit.

It localises to the plastid. This is Small ribosomal subunit protein uS15c (rps15) from Aneura mirabilis (Parasitic liverwort).